Consider the following 326-residue polypeptide: MIERIWSGSSLVYLLLLPLSWLYGLVSGLIRLSYRCGLRKSWRAPVPVVVVGNLTAGGNGKTPMVIWLVEQLQQRGYRVGVVSRGYGGKAEAYPLLLNAGTTTQQAGDEPVLIYQRTAAPVAISPKRSEAVQALLKQQPLDVVITDDGLQHYALQRDFELVVIDGVRRFGNGWWLPAGPMRERASRLNSVDALIANGGVAQPGEIAMRLQARDAVNVASGERRPAVELPHVVAMAGIGHPPRFFATLEKLGVAVEKEVAFADHQEYQHGPLAALVSSEQTLLMTEKDAVKCRAFAQPNWWYLPVDAVLPPDQAEQLLHNIEALLTK.

55–62 (TAGGNGKT) lines the ATP pocket.

The protein belongs to the LpxK family.

It carries out the reaction a lipid A disaccharide + ATP = a lipid IVA + ADP + H(+). The protein operates within glycolipid biosynthesis; lipid IV(A) biosynthesis; lipid IV(A) from (3R)-3-hydroxytetradecanoyl-[acyl-carrier-protein] and UDP-N-acetyl-alpha-D-glucosamine: step 6/6. Transfers the gamma-phosphate of ATP to the 4'-position of a tetraacyldisaccharide 1-phosphate intermediate (termed DS-1-P) to form tetraacyldisaccharide 1,4'-bis-phosphate (lipid IVA). The chain is Tetraacyldisaccharide 4'-kinase from Serratia proteamaculans (strain 568).